The following is a 544-amino-acid chain: CTP synthase (544 aa).

Residues 1–267 (MTKFVFVTGG…AQRVLEILNL (267 aa)) are amidoligase domain. Ser13 serves as a coordination point for CTP. Ser13 lines the UTP pocket. 14–19 (SIGKGI) provides a ligand contact to ATP. Residue Tyr54 coordinates L-glutamine. Asp71 is a binding site for ATP. Residues Asp71 and Glu141 each coordinate Mg(2+). CTP contacts are provided by residues 148 to 150 (DIE), 188 to 193 (KTKPTQ), and Lys224. Residues 188-193 (KTKPTQ) and Lys224 each bind UTP. The region spanning 292–534 (EIAIVGKYVR…IEAALRSRPQ (243 aa)) is the Glutamine amidotransferase type-1 domain. Gly354 is a binding site for L-glutamine. Cys381 (nucleophile; for glutamine hydrolysis) is an active-site residue. Residues 382–385 (LGMQ), Glu405, and Arg462 contribute to the L-glutamine site. Active-site residues include His507 and Glu509.

Belongs to the CTP synthase family. As to quaternary structure, homotetramer.

The catalysed reaction is UTP + L-glutamine + ATP + H2O = CTP + L-glutamate + ADP + phosphate + 2 H(+). The enzyme catalyses L-glutamine + H2O = L-glutamate + NH4(+). It catalyses the reaction UTP + NH4(+) + ATP = CTP + ADP + phosphate + 2 H(+). The protein operates within pyrimidine metabolism; CTP biosynthesis via de novo pathway; CTP from UDP: step 2/2. Allosterically activated by GTP, when glutamine is the substrate; GTP has no effect on the reaction when ammonia is the substrate. The allosteric effector GTP functions by stabilizing the protein conformation that binds the tetrahedral intermediate(s) formed during glutamine hydrolysis. Inhibited by the product CTP, via allosteric rather than competitive inhibition. Catalyzes the ATP-dependent amination of UTP to CTP with either L-glutamine or ammonia as the source of nitrogen. Regulates intracellular CTP levels through interactions with the four ribonucleotide triphosphates. The chain is CTP synthase from Synechococcus sp. (strain JA-2-3B'a(2-13)) (Cyanobacteria bacterium Yellowstone B-Prime).